The following is a 271-amino-acid chain: MPELPEVEVTRQGIAPHLVEQTVVDLVIRNASLRWPVPELAKQIIGQTIRQVRRRAKYLLIDTDAGTSIVHLGMSGSLRILPHDTPVEKHDHIDLVLANGRILRFNDPRRFGAWLWCQLPEEAHPLLEKLGPEPLTDAFNVNQLAAALAGKKKAIKLCLMDNHIVVGVGNIYANEALFAAGIHPEAEAGKIDIERLTVLVAEVKQILAHAIKQGGTTLKDFTNAEGKPGYFAQKLHVYGRGGETCTQCGNLLSEIRLGQRTTVFCGICQTR.

The Schiff-base intermediate with DNA role is filled by proline 2. Glutamate 3 serves as the catalytic Proton donor. Lysine 57 functions as the Proton donor; for beta-elimination activity in the catalytic mechanism. Positions 90, 109, and 151 each coordinate DNA. An FPG-type zinc finger spans residues 236-270 (HVYGRGGETCTQCGNLLSEIRLGQRTTVFCGICQT). Arginine 260 (proton donor; for delta-elimination activity) is an active-site residue.

Belongs to the FPG family. In terms of assembly, monomer. Zn(2+) is required as a cofactor.

It catalyses the reaction Hydrolysis of DNA containing ring-opened 7-methylguanine residues, releasing 2,6-diamino-4-hydroxy-5-(N-methyl)formamidopyrimidine.. The enzyme catalyses 2'-deoxyribonucleotide-(2'-deoxyribose 5'-phosphate)-2'-deoxyribonucleotide-DNA = a 3'-end 2'-deoxyribonucleotide-(2,3-dehydro-2,3-deoxyribose 5'-phosphate)-DNA + a 5'-end 5'-phospho-2'-deoxyribonucleoside-DNA + H(+). Functionally, involved in base excision repair of DNA damaged by oxidation or by mutagenic agents. Acts as a DNA glycosylase that recognizes and removes damaged bases. Has a preference for oxidized purines, such as 7,8-dihydro-8-oxoguanine (8-oxoG). Has AP (apurinic/apyrimidinic) lyase activity and introduces nicks in the DNA strand. Cleaves the DNA backbone by beta-delta elimination to generate a single-strand break at the site of the removed base with both 3'- and 5'-phosphates. The polypeptide is Formamidopyrimidine-DNA glycosylase (Shewanella sp. (strain MR-4)).